Here is a 305-residue protein sequence, read N- to C-terminus: Tyrosine recombinase XerC (305 aa).

The Core-binding (CB) domain occupies 4–95 (TSIQELINKW…AVKNFYKFLE (92 aa)). Positions 116 to 298 (LLPKSLSEDD…SIKHLVSVYT (183 aa)) constitute a Tyr recombinase domain. Residues Arg-159, Lys-182, His-250, Arg-253, and His-276 contribute to the active site. Tyr-285 serves as the catalytic O-(3'-phospho-DNA)-tyrosine intermediate.

Belongs to the 'phage' integrase family. XerC subfamily. As to quaternary structure, forms a cyclic heterotetrameric complex composed of two molecules of XerC and two molecules of XerD.

The protein localises to the cytoplasm. Functionally, site-specific tyrosine recombinase, which acts by catalyzing the cutting and rejoining of the recombining DNA molecules. The XerC-XerD complex is essential to convert dimers of the bacterial chromosome into monomers to permit their segregation at cell division. It also contributes to the segregational stability of plasmids. This chain is Tyrosine recombinase XerC, found in Rickettsia canadensis (strain McKiel).